Consider the following 284-residue polypeptide: uncharacterized protein (284 aa).

Residues methionine 1–alanine 23 form the signal peptide.

The protein belongs to the surface antigen msp4 family.

This is an uncharacterized protein from Brucella melitensis biotype 1 (strain ATCC 23456 / CCUG 17765 / NCTC 10094 / 16M).